The chain runs to 362 residues: 3-dehydroquinate synthase (362 aa).

Residues 71-76 (DGEQYK), 105-109 (GVIGD), 129-130 (TT), K142, K151, and 169-172 (CLKT) contribute to the NAD(+) site. Zn(2+) is bound by residues E184, H247, and H264.

The protein belongs to the sugar phosphate cyclases superfamily. Dehydroquinate synthase family. It depends on NAD(+) as a cofactor. Requires Co(2+) as cofactor. Zn(2+) serves as cofactor.

The protein resides in the cytoplasm. It catalyses the reaction 7-phospho-2-dehydro-3-deoxy-D-arabino-heptonate = 3-dehydroquinate + phosphate. Its pathway is metabolic intermediate biosynthesis; chorismate biosynthesis; chorismate from D-erythrose 4-phosphate and phosphoenolpyruvate: step 2/7. Catalyzes the conversion of 3-deoxy-D-arabino-heptulosonate 7-phosphate (DAHP) to dehydroquinate (DHQ). The sequence is that of 3-dehydroquinate synthase from Salmonella typhi.